The primary structure comprises 194 residues: Glycerol-3-phosphate acyltransferase (194 aa).

6 helical membrane passes run 3 to 23 (AGLF…GLLL), 52 to 72 (VGIL…LLAW), 80 to 100 (MQAW…FLLF), 112 to 132 (VFLA…ILLV), 135 to 155 (WRYI…IIFF), and 162 to 182 (LLIA…SNIS).

It belongs to the PlsY family. Probably interacts with PlsX.

The protein localises to the cell inner membrane. It carries out the reaction an acyl phosphate + sn-glycerol 3-phosphate = a 1-acyl-sn-glycero-3-phosphate + phosphate. It functions in the pathway lipid metabolism; phospholipid metabolism. Its function is as follows. Catalyzes the transfer of an acyl group from acyl-phosphate (acyl-PO(4)) to glycerol-3-phosphate (G3P) to form lysophosphatidic acid (LPA). This enzyme utilizes acyl-phosphate as fatty acyl donor, but not acyl-CoA or acyl-ACP. The polypeptide is Glycerol-3-phosphate acyltransferase (Trichlorobacter lovleyi (strain ATCC BAA-1151 / DSM 17278 / SZ) (Geobacter lovleyi)).